A 593-amino-acid polypeptide reads, in one-letter code: MDDNLSGEEEDYYYSSDQESLNGIDNDESVSIPVSSRSNTVKVITKESLLAAQREDLRRVMELLSVKEHHARTLLIHYRWDVEKLFAVLVEKGKDSLFSGAGVTLLENQSCDSSVSGSSSMMSCDICVEDVPGYQLTRMDCGHSFCNNCWTGHFTVKINEGQSKRIICMAHKCNAICDEDVVRALVSKSQPDLAEKFDRFLLESYIEDNKMVKWCPSTPHCGNAIRVEDDELCEVECSCGLQFCFSCSSQAHSPCSCVMWELWRKKCFDESETVNWITVHTKPCPKCHKPVEKNGGCNLVTCLCRQSFCWLCGEATGRDHTWARISGHSCGRFQEDKEKQMERAKRDLKRYMHYHNRYKAHIDSSKLEAKLSNNISKKVSISEKRELQLKDFSWATNGLHRLFRSRRVLSYSYPFAFYMFGDELFKDEMSSEEREIKQNLFEDQQQQLEANVEKLSKFLEEPFDQFADDKVMQIRIQVINLSVAVDTLCENMYECIENDLLGSLQLGIHNITPYRSNGIERASDFYSSQNSKEAVGQSSDCGWTSRLDQALESGKSEDTSCSSGKRARIDESYRNSQTTLLDLNLPAEAIERK.

A TRIAD supradomain region spans residues 120-334; the sequence is SMMSCDICVE…ISGHSCGRFQ (215 aa). Zn(2+) contacts are provided by Cys124, Cys127, Cys141, His143, Cys146, Cys149, Cys168, Cys173, Cys215, Cys221, Cys237, Cys239, Cys244, Cys247, His252, Cys257, Cys284, and Cys287. An RING-type 1 zinc finger spans residues 124–173; sequence CDICVEDVPGYQLTRMDCGHSFCNNCWTGHFTVKINEGQSKRIICMAHKC. Residues 195-257 form an IBR-type zinc finger; it reads EKFDRFLLES…SSQAHSPCSC (63 aa). Residues 284 to 312 form an RING-type 2; atypical zinc finger; that stretch reads CPKCHKPVEKNGGCNLVTCLCRQSFCWLC. Residue Cys297 is part of the active site. Residues Cys302, Cys304, Cys309, Cys312, His320, and Cys330 each coordinate Zn(2+).

This sequence belongs to the RBR family. Ariadne subfamily. It depends on Zn(2+) as a cofactor. As to expression, ubiquitous.

It catalyses the reaction [E2 ubiquitin-conjugating enzyme]-S-ubiquitinyl-L-cysteine + [acceptor protein]-L-lysine = [E2 ubiquitin-conjugating enzyme]-L-cysteine + [acceptor protein]-N(6)-ubiquitinyl-L-lysine.. Its pathway is protein modification; protein ubiquitination. Functionally, might act as an E3 ubiquitin-protein ligase, or as part of E3 complex, which accepts ubiquitin from specific E2 ubiquitin-conjugating enzymes and then transfers it to substrates. The polypeptide is Probable E3 ubiquitin-protein ligase ARI2 (ARI2) (Arabidopsis thaliana (Mouse-ear cress)).